Consider the following 434-residue polypeptide: Arrestin domain-containing protein 1 (434 aa).

The tract at residues 292-349 (SPCPGRESSPGTLSLVVPSAPPQEEAEAVASGPHFSDPVSLSTKSHSQQQPLSAPLGS) is disordered. Polar residues predominate over residues 330–343 (VSLSTKSHSQQQPL). Short sequence motifs (PPxY motif) lie at residues 401–404 (PPEY) and 414–417 (PPSY).

It belongs to the arrestin family. In terms of assembly, interacts (via PPxY motifs) with ITCH (via WW domains); the interaction is direct and participates in the recruitment of the ubiquitin-protein ligase ITCH to the NOTCH1 receptor. Interacts with ARRB1 and ARRB2; the interaction is direct. Interacts with TSG101; may recruit TSG101 to the plasma membrane. Interacts (via PPxY motifs) with WWP2 (via WW domains); ubiquitinates ARRDC1. Interacts with SLC11A2; controls the incorporation of SLC11A2 into extracellular vesicles through an ubiquitination-dependent mechanism. Interacts with WWP1 (via WW domains). Interacts with NEDD4 (via WW domains). Interacts with PDCD6IP. In terms of processing, ubiquitinated. Ubiquitination by WWP2; promotes localization to extracellular microvesicles. Ubiquitinated by WWP1.

The protein resides in the cell membrane. Functions as an adapter recruiting ubiquitin-protein ligases to their specific substrates. Through an ubiquitination-dependent mechanism plays for instance a role in the incorporation of SLC11A2 into extracellular vesicles. More generally, plays a role in the extracellular transport of proteins between cells through the release in the extracellular space of microvesicles. By participating to the ITCH-mediated ubiquitination and subsequent degradation of NOTCH1, negatively regulates the NOTCH signaling pathway. The protein is Arrestin domain-containing protein 1 of Mus musculus (Mouse).